The sequence spans 378 residues: Cytochrome b (378 aa).

The next 4 membrane-spanning stretches (helical) occupy residues 34 to 54 (FGSL…FLAM), 78 to 99 (WLLR…YLHV), 114 to 134 (WLIG…GYVL), and 179 to 199 (FFTF…IHLL). His84 and His98 together coordinate heme b. Residues His183 and His197 each coordinate heme b. Residue His202 participates in a ubiquinone binding. A run of 4 helical transmembrane segments spans residues 227-247 (FKDI…VLIS), 289-309 (LGGV…PFYN), 321-341 (INQV…WIGA), and 348-368 (YVLI…VNPL).

This sequence belongs to the cytochrome b family. The main subunits of complex b-c1 are: cytochrome b, cytochrome c1 and the Rieske protein. Heme b serves as cofactor.

It is found in the mitochondrion inner membrane. Component of the ubiquinol-cytochrome c reductase complex (complex III or cytochrome b-c1 complex) that is part of the mitochondrial respiratory chain. The b-c1 complex mediates electron transfer from ubiquinol to cytochrome c. Contributes to the generation of a proton gradient across the mitochondrial membrane that is then used for ATP synthesis. This is Cytochrome b (mt:Cyt-b) from Drosophila sechellia (Fruit fly).